Consider the following 338-residue polypeptide: Ferrochelatase (338 aa).

His-202 and Glu-283 together coordinate Fe cation.

It belongs to the ferrochelatase family.

It is found in the cytoplasm. It catalyses the reaction heme b + 2 H(+) = protoporphyrin IX + Fe(2+). Its pathway is porphyrin-containing compound metabolism; protoheme biosynthesis; protoheme from protoporphyrin-IX: step 1/1. Functionally, catalyzes the ferrous insertion into protoporphyrin IX. In Acinetobacter baumannii (strain ATCC 17978 / DSM 105126 / CIP 53.77 / LMG 1025 / NCDC KC755 / 5377), this protein is Ferrochelatase.